Reading from the N-terminus, the 231-residue chain is Axial regulator YABBY 4 (231 aa).

The C4-type zinc finger occupies 26–53 (CGFCTTILLVSVPFTSLSMVVTVRCGHC). Disordered stretches follow at residues 98-120 (KVNQ…EDED) and 211-231 (NNGF…SPFE).

Belongs to the YABBY family. As to quaternary structure, interacts with SPL/NZZ.

It is found in the nucleus. Essential for the formation and the abaxial-adaxial asymmetric growth of the ovule outer integument. The chain is Axial regulator YABBY 4 (YAB4) from Arabidopsis thaliana (Mouse-ear cress).